The chain runs to 175 residues: NADH-quinone oxidoreductase subunit B (175 aa).

4 residues coordinate [4Fe-4S] cluster: Cys-49, Cys-50, Cys-115, and Cys-145.

Belongs to the complex I 20 kDa subunit family. NDH-1 is composed of 14 different subunits. Subunits NuoB, C, D, E, F, and G constitute the peripheral sector of the complex. [4Fe-4S] cluster serves as cofactor.

It localises to the cell membrane. It catalyses the reaction a quinone + NADH + 5 H(+)(in) = a quinol + NAD(+) + 4 H(+)(out). In terms of biological role, NDH-1 shuttles electrons from NADH, via FMN and iron-sulfur (Fe-S) centers, to quinones in the respiratory chain. The immediate electron acceptor for the enzyme in this species is believed to be a menaquinone. Couples the redox reaction to proton translocation (for every two electrons transferred, four hydrogen ions are translocated across the cytoplasmic membrane), and thus conserves the redox energy in a proton gradient. The polypeptide is NADH-quinone oxidoreductase subunit B (Heliobacterium modesticaldum (strain ATCC 51547 / Ice1)).